A 561-amino-acid polypeptide reads, in one-letter code: DNA ligase (561 aa).

Glu253 lines the ATP pocket. The active-site N6-AMP-lysine intermediate is Lys255. 6 residues coordinate ATP: Arg260, Arg275, Glu304, Phe344, Arg421, and Lys427.

The protein belongs to the ATP-dependent DNA ligase family. The cofactor is Mg(2+).

The enzyme catalyses ATP + (deoxyribonucleotide)n-3'-hydroxyl + 5'-phospho-(deoxyribonucleotide)m = (deoxyribonucleotide)n+m + AMP + diphosphate.. DNA ligase that seals nicks in double-stranded DNA during DNA replication, DNA recombination and DNA repair. This is DNA ligase from Halobacterium salinarum (strain ATCC 29341 / DSM 671 / R1).